Here is a 437-residue protein sequence, read N- to C-terminus: Eukaryotic peptide chain release factor subunit 1 (437 aa).

Positions 61–64 (NIKS) match the NIKS motif; plays an important role in translational termination motif.

Belongs to the eukaryotic release factor 1 family. As to quaternary structure, component of the eRF1-eRF3-GTP ternary complex, composed of ETF1/ERF1 and eRF3 (GSPT1/ERF3A or GSPT2/ERF3B) and GTP.

It is found in the cytoplasm. In terms of biological role, component of the eRF1-eRF3-GTP ternary complex, a ternary complex that mediates translation termination in response to the termination codons. The eRF1-eRF3-GTP complex binds to a stop codon in the ribosomal A-site. ETF1/ERF1 is responsible for stop codon recognition and inducing hydrolysis of peptidyl-tRNA. Following GTP hydrolysis, eRF3 (GSPT1/ERF3A or GSPT2/ERF3B) dissociates, permitting ETF1/eRF1 to accommodate fully in the A-site, followed by hydrolysis of peptidyl-tRNA. This chain is Eukaryotic peptide chain release factor subunit 1 (etf1), found in Xenopus laevis (African clawed frog).